The following is a 101-amino-acid chain: Large ribosomal subunit protein uL23 (101 aa).

The protein belongs to the universal ribosomal protein uL23 family. In terms of assembly, part of the 50S ribosomal subunit. Contacts protein L29, and trigger factor when it is bound to the ribosome.

Functionally, one of the early assembly proteins it binds 23S rRNA. One of the proteins that surrounds the polypeptide exit tunnel on the outside of the ribosome. Forms the main docking site for trigger factor binding to the ribosome. This chain is Large ribosomal subunit protein uL23, found in Micrococcus luteus (strain ATCC 4698 / DSM 20030 / JCM 1464 / CCM 169 / CCUG 5858 / IAM 1056 / NBRC 3333 / NCIMB 9278 / NCTC 2665 / VKM Ac-2230) (Micrococcus lysodeikticus).